The primary structure comprises 152 residues: Ribosomal RNA large subunit methyltransferase H (152 aa).

S-adenosyl-L-methionine-binding positions include leucine 70, glycine 101, and 120–125; that span reads LSDLTF.

This sequence belongs to the RNA methyltransferase RlmH family. As to quaternary structure, homodimer.

Its subcellular location is the cytoplasm. The enzyme catalyses pseudouridine(1915) in 23S rRNA + S-adenosyl-L-methionine = N(3)-methylpseudouridine(1915) in 23S rRNA + S-adenosyl-L-homocysteine + H(+). Functionally, specifically methylates the pseudouridine at position 1915 (m3Psi1915) in 23S rRNA. The polypeptide is Ribosomal RNA large subunit methyltransferase H (Pseudothermotoga lettingae (strain ATCC BAA-301 / DSM 14385 / NBRC 107922 / TMO) (Thermotoga lettingae)).